The primary structure comprises 292 residues: MTFTVTRERAQWVHDMARARDGLPYAYGGAFTNNPRVSTDCSGLVLQTGAWYGGRTDWVGNRYGSTESFRLDHKIVYDLGFKRMPRGGPAALPIKPVMLVGLQHGGGGVYSHTACTLMTMDHPGGPVKMSDRGVDWESHGNRNGVGVELYEGARAWNDPLFHDFWYLDAVLEDEGDDDELADPVLGKMIREIHACLFNQTASTSDLATPGEGAIWQLHQKIHSIDGMLHPIHAERRARAGDLGELHRIVLAAKGLGVKRDEVTKRVYQSILADIERDNPEVLQRYIAERGGL.

Belongs to the L5likevirus endolysin A protein family.

Its function is as follows. Endolysin that degrades host peptidoglycans and participates with the holin protein in the sequential events which lead to the programmed host cell lysis releasing the mature viral particles. Once the holin has permeabilized the host cell membrane, the endolysin can reach the periplasm and break down the peptidoglycan layer. The polypeptide is Endolysin A (10) (Mycobacterium phage L5 (Mycobacteriophage L5)).